Consider the following 199-residue polypeptide: Recombination protein RecR (199 aa).

The segment at 56-71 (CQVCFHLSAESTCEIC) adopts a C4-type zinc-finger fold. The Toprim domain occupies 79-173 (QTLCVVADSR…KVTRIAFGLP (95 aa)).

Belongs to the RecR family.

In terms of biological role, may play a role in DNA repair. It seems to be involved in an RecBC-independent recombinational process of DNA repair. It may act with RecF and RecO. This chain is Recombination protein RecR, found in Gloeothece citriformis (strain PCC 7424) (Cyanothece sp. (strain PCC 7424)).